Here is a 180-residue protein sequence, read N- to C-terminus: Large ribosomal subunit protein uL5 (180 aa).

The protein belongs to the universal ribosomal protein uL5 family. As to quaternary structure, part of the 50S ribosomal subunit; part of the 5S rRNA/L5/L18/L25 subcomplex. Contacts the 5S rRNA and the P site tRNA. Forms a bridge to the 30S subunit in the 70S ribosome.

Functionally, this is one of the proteins that bind and probably mediate the attachment of the 5S RNA into the large ribosomal subunit, where it forms part of the central protuberance. In the 70S ribosome it contacts protein S13 of the 30S subunit (bridge B1b), connecting the 2 subunits; this bridge is implicated in subunit movement. Contacts the P site tRNA; the 5S rRNA and some of its associated proteins might help stabilize positioning of ribosome-bound tRNAs. In Mycoplasma capricolum subsp. capricolum (strain California kid / ATCC 27343 / NCTC 10154), this protein is Large ribosomal subunit protein uL5.